A 332-amino-acid polypeptide reads, in one-letter code: Biotin synthase (332 aa).

The Radical SAM core domain maps to 51–279 (YKVQLASLLS…LSRVRLSAGR (229 aa)). Residues C66, C70, and C73 each coordinate [4Fe-4S] cluster. The [2Fe-2S] cluster site is built by C110, C142, C202, and R274.

The protein belongs to the radical SAM superfamily. Biotin synthase family. As to quaternary structure, homodimer. The cofactor is [4Fe-4S] cluster. Requires [2Fe-2S] cluster as cofactor.

It catalyses the reaction (4R,5S)-dethiobiotin + (sulfur carrier)-SH + 2 reduced [2Fe-2S]-[ferredoxin] + 2 S-adenosyl-L-methionine = (sulfur carrier)-H + biotin + 2 5'-deoxyadenosine + 2 L-methionine + 2 oxidized [2Fe-2S]-[ferredoxin]. It functions in the pathway cofactor biosynthesis; biotin biosynthesis; biotin from 7,8-diaminononanoate: step 2/2. Its function is as follows. Catalyzes the conversion of dethiobiotin (DTB) to biotin by the insertion of a sulfur atom into dethiobiotin via a radical-based mechanism. This is Biotin synthase from Prochlorococcus marinus (strain MIT 9211).